The following is a 113-amino-acid chain: Nucleoid-associated protein CLJ_B0037 (113 aa).

Basic and acidic residues predominate over residues 93-102 (EEDTSSEVKR). Positions 93–113 (EEDTSSEVKRLTGGMNLPGMF) are disordered.

It belongs to the YbaB/EbfC family. Homodimer.

It localises to the cytoplasm. It is found in the nucleoid. Binds to DNA and alters its conformation. May be involved in regulation of gene expression, nucleoid organization and DNA protection. This is Nucleoid-associated protein CLJ_B0037 from Clostridium botulinum (strain 657 / Type Ba4).